The primary structure comprises 327 residues: Flap endonuclease 1 (327 aa).

Positions 1-100 (MGNADLRQLA…DEIADRREQR (100 aa)) are N-domain. The Mg(2+) site is built by Asp-28, Asp-82, Glu-154, Glu-156, Asp-176, Asp-178, and Asp-226. An I-domain region spans residues 118-247 (EAARLDARTQ…TALDAIGEHG (130 aa)). The segment at 319-327 (AQTGLDRWT) is interaction with PCNA.

It belongs to the XPG/RAD2 endonuclease family. FEN1 subfamily. In terms of assembly, interacts with PCNA. PCNA stimulates the nuclease activity without altering cleavage specificity. Mg(2+) is required as a cofactor.

Its function is as follows. Structure-specific nuclease with 5'-flap endonuclease and 5'-3' exonuclease activities involved in DNA replication and repair. During DNA replication, cleaves the 5'-overhanging flap structure that is generated by displacement synthesis when DNA polymerase encounters the 5'-end of a downstream Okazaki fragment. Binds the unpaired 3'-DNA end and kinks the DNA to facilitate 5' cleavage specificity. Cleaves one nucleotide into the double-stranded DNA from the junction in flap DNA, leaving a nick for ligation. Also involved in the base excision repair (BER) pathway. Acts as a genome stabilization factor that prevents flaps from equilibrating into structures that lead to duplications and deletions. Also possesses 5'-3' exonuclease activity on nicked or gapped double-stranded DNA. This chain is Flap endonuclease 1, found in Halobacterium salinarum (strain ATCC 29341 / DSM 671 / R1).